The following is a 281-amino-acid chain: Large ribosomal subunit protein uL2 (281 aa).

Residues 208 to 281 (AGRSRYAGQR…RGRKRGPHTR (74 aa)) are disordered. Positions 254–281 (TVGKKTRSHKARSNKFIVRGRKRGPHTR) are enriched in basic residues.

Belongs to the universal ribosomal protein uL2 family. As to quaternary structure, part of the 50S ribosomal subunit. Forms a bridge to the 30S subunit in the 70S ribosome.

One of the primary rRNA binding proteins. Required for association of the 30S and 50S subunits to form the 70S ribosome, for tRNA binding and peptide bond formation. It has been suggested to have peptidyltransferase activity; this is somewhat controversial. Makes several contacts with the 16S rRNA in the 70S ribosome. The sequence is that of Large ribosomal subunit protein uL2 from Limosilactobacillus fermentum (strain NBRC 3956 / LMG 18251) (Lactobacillus fermentum).